The chain runs to 216 residues: UDP-N-acetylglucosamine transferase subunit ALG14 (216 aa).

Topologically, residues 1 to 3 (MVC) are lumenal. The helical transmembrane segment at 4–24 (VLTLAASAGGLAVLLIVRLWA) threads the bilayer. The Cytoplasmic portion of the chain corresponds to 25-216 (VLRSHPVTPR…PKSVYLGRIV (192 aa)).

Belongs to the ALG14 family. In terms of assembly, forms with ALG13 the active heterodimeric UDP-N-acetylglucosamine transferase complex.

It is found in the endoplasmic reticulum membrane. In terms of biological role, part of the UDP-N-acetylglucosamine transferase complex that operates in the biosynthetic pathway of dolichol-linked oligosaccharides, the glycan precursors employed in protein asparagine (N)-glycosylation. The assembly of dolichol-linked oligosaccharides begins on the cytosolic side of the endoplasmic reticulum membrane and finishes in its lumen. The sequential addition of sugars to dolichol pyrophosphate produces dolichol-linked oligosaccharides containing fourteen sugars, including two GlcNAcs, nine mannoses and three glucoses. Once assembled, the oligosaccharides are transferred from the lipid to nascent proteins by oligosaccharyltransferases. Functions as a protein-membrane adapter recruiting ALG13 at the cytoplasmic face of the endoplasmic reticulum, where the complex catalyzes the second step of dolichol pyrophosphate biosynthesis, transferring a beta1,4-linked N-acetylglucosamine (GlcNAc) from UDP-GlcNAc to GlcNAc-pyrophosphatedolichol (Gn-PDol) to produce N,N'-diacetylchitobiosyl diphosphodolichol. N,N'-diacetylchitobiosyl diphosphodolichol is a substrate for ALG1, the following enzyme in the biosynthetic pathway. The protein is UDP-N-acetylglucosamine transferase subunit ALG14 of Rattus norvegicus (Rat).